A 316-amino-acid polypeptide reads, in one-letter code: Ribosomal protein L11 methyltransferase (316 aa).

4 residues coordinate S-adenosyl-L-methionine: T157, G178, D200, and N243.

Belongs to the methyltransferase superfamily. PrmA family.

It localises to the cytoplasm. The enzyme catalyses L-lysyl-[protein] + 3 S-adenosyl-L-methionine = N(6),N(6),N(6)-trimethyl-L-lysyl-[protein] + 3 S-adenosyl-L-homocysteine + 3 H(+). Functionally, methylates ribosomal protein L11. This chain is Ribosomal protein L11 methyltransferase, found in Streptococcus pneumoniae serotype 4 (strain ATCC BAA-334 / TIGR4).